The primary structure comprises 457 residues: uncharacterized protein (457 aa).

Position 75 is an N6-(pyridoxal phosphate)lysine (Lys75).

It depends on pyridoxal 5'-phosphate as a cofactor.

This is an uncharacterized protein from Sinorhizobium fredii (strain NBRC 101917 / NGR234).